Reading from the N-terminus, the 120-residue chain is Large ribosomal subunit protein bL12 (120 aa).

The span at K95–E112 shows a compositional bias: basic and acidic residues. Positions K95 to K120 are disordered.

This sequence belongs to the bacterial ribosomal protein bL12 family. Homodimer. Part of the ribosomal stalk of the 50S ribosomal subunit. Forms a multimeric L10(L12)X complex, where L10 forms an elongated spine to which 2 to 4 L12 dimers bind in a sequential fashion. Binds GTP-bound translation factors.

In terms of biological role, forms part of the ribosomal stalk which helps the ribosome interact with GTP-bound translation factors. Is thus essential for accurate translation. The protein is Large ribosomal subunit protein bL12 of Oceanobacillus iheyensis (strain DSM 14371 / CIP 107618 / JCM 11309 / KCTC 3954 / HTE831).